A 201-amino-acid chain; its full sequence is IMP cyclohydrolase (201 aa).

The protein belongs to the archaeal IMP cyclohydrolase family.

It catalyses the reaction IMP + H2O = 5-formamido-1-(5-phospho-D-ribosyl)imidazole-4-carboxamide. It functions in the pathway purine metabolism; IMP biosynthesis via de novo pathway; IMP from 5-formamido-1-(5-phospho-D-ribosyl)imidazole-4-carboxamide: step 1/1. Catalyzes the cyclization of 5-formylamidoimidazole-4-carboxamide ribonucleotide to IMP. The protein is IMP cyclohydrolase of Methanococcus maripaludis (strain C7 / ATCC BAA-1331).